The following is a 632-amino-acid chain: Biosynthetic arginine decarboxylase (632 aa).

Lysine 101 is subject to N6-(pyridoxal phosphate)lysine. Phenylalanine 281–tyrosine 291 lines the substrate pocket.

Belongs to the Orn/Lys/Arg decarboxylase class-II family. SpeA subfamily. It depends on Mg(2+) as a cofactor. The cofactor is pyridoxal 5'-phosphate.

The enzyme catalyses L-arginine + H(+) = agmatine + CO2. It functions in the pathway amine and polyamine biosynthesis; agmatine biosynthesis; agmatine from L-arginine: step 1/1. Functionally, catalyzes the biosynthesis of agmatine from arginine. In Salmonella dublin (strain CT_02021853), this protein is Biosynthetic arginine decarboxylase.